Consider the following 604-residue polypeptide: Terpenoid synthase 30 (604 aa).

Residues N356, D360, N500, T504, and E508 each coordinate Mg(2+). The short motif at 356 to 360 (NDVCD) is the DDXXD motif; degenerate element.

The protein belongs to the terpene synthase family. Tpsa subfamily. Mg(2+) is required as a cofactor. Mn(2+) serves as cofactor.

Its subcellular location is the cytoplasm. It participates in secondary metabolite biosynthesis; terpenoid biosynthesis. In terms of biological role, involved in terpene biosynthesis in roots. Possesses sesquiterpene (C15) synthase activity and diterpene (C20) synthase activity in vitro. The sequence is that of Terpenoid synthase 30 from Arabidopsis thaliana (Mouse-ear cress).